The chain runs to 779 residues: Probable ATP-dependent RNA helicase DHX40 (779 aa).

The tract at residues methionine 1 to phenylalanine 53 is disordered. Over residues arginine 13–glycine 41 the composition is skewed to basic and acidic residues. A compositionally biased stretch (polar residues) spans cysteine 42–phenylalanine 53. The Helicase ATP-binding domain occupies isoleucine 63–proline 231. Glycine 76 to threonine 83 contacts ATP. The DEAH box signature appears at aspartate 173–histidine 176. The 180-residue stretch at threonine 263 to alanine 442 folds into the Helicase C-terminal domain.

The protein belongs to the DEAD box helicase family. DEAH subfamily.

The enzyme catalyses ATP + H2O = ADP + phosphate + H(+). Functionally, probable ATP-dependent RNA helicase. The protein is Probable ATP-dependent RNA helicase DHX40 (Dhx40) of Rattus norvegicus (Rat).